We begin with the raw amino-acid sequence, 335 residues long: Eukaryotic translation initiation factor 3 subunit I (335 aa).

WD repeat units follow at residues 8–47 (GHER…RLGT), 50–91 (GHQG…KVWD), 145–184 (CTES…QLEN), 189–228 (EFDN…ILKT), and 286–325 (GHFG…FDFM).

This sequence belongs to the eIF-3 subunit I family. In terms of assembly, component of the eukaryotic translation initiation factor 3 (eIF-3) complex.

It localises to the cytoplasm. Functionally, component of the eukaryotic translation initiation factor 3 (eIF-3) complex, which is involved in protein synthesis of a specialized repertoire of mRNAs and, together with other initiation factors, stimulates binding of mRNA and methionyl-tRNAi to the 40S ribosome. The eIF-3 complex specifically targets and initiates translation of a subset of mRNAs involved in cell proliferation. The protein is Eukaryotic translation initiation factor 3 subunit I (tif34) of Aspergillus oryzae (strain ATCC 42149 / RIB 40) (Yellow koji mold).